Reading from the N-terminus, the 1004-residue chain is Presequence protease, mitochondrial (1004 aa).

Residues 1 to 34 (MLRNAAAGARKAVTELSQFPKPGEKLHGFTLVRS) constitute a mitochondrion transit peptide. His84 provides a ligand contact to Zn(2+). The active-site Proton acceptor is Glu87. His88 serves as a coordination point for Zn(2+). Residue Glu160 is part of the active site. A Zn(2+)-binding site is contributed by Glu188.

Belongs to the peptidase M16 family. PreP subfamily. Monomer and homodimer; homodimerization is induced by binding of the substrate. Zn(2+) is required as a cofactor.

It localises to the mitochondrion intermembrane space. Its subcellular location is the mitochondrion matrix. Its function is as follows. Degrades mitochondrial transit peptides after their cleavage in the intermembrane space or in the matrix, and presequence peptides; clearance of these peptides is required to keep the presequence processing machinery running. Preferentially cleaves the N-terminal side of paired basic amino acid residues. Also degrades other unstructured peptides. May function as an ATP-dependent peptidase as opposed to a metalloendopeptidase. The protein is Presequence protease, mitochondrial (CYM1) of Gibberella zeae (strain ATCC MYA-4620 / CBS 123657 / FGSC 9075 / NRRL 31084 / PH-1) (Wheat head blight fungus).